Reading from the N-terminus, the 206-residue chain is Large ribosomal subunit protein eL13z (206 aa).

Positions 185–206 (TNKRHAGARAKRAAEAEKEEKK) are disordered. Positions 186–195 (NKRHAGARAK) are enriched in basic residues. Positions 196–206 (RAAEAEKEEKK) are enriched in basic and acidic residues.

This sequence belongs to the eukaryotic ribosomal protein eL13 family.

The protein localises to the cytoplasm. The sequence is that of Large ribosomal subunit protein eL13z (RPL13B) from Arabidopsis thaliana (Mouse-ear cress).